Consider the following 631-residue polypeptide: Probable potassium transport system protein Kup (631 aa).

12 consecutive transmembrane segments (helical) span residues 17 to 37 (IGLLIAAVGVVYGDIGTSPLY), 56 to 76 (ILGVLSLIFWSLIWVVSFKYM), 109 to 129 (MMMVVFGLFGAALFYGDSMIT), 147 to 167 (GLDHWIVPMALVVLVGLFLIQ), 174 to 194 (IGVLFGPVMVVWFLVLGALGV), 215 to 235 (FFIIHPGIGVAILGAVVLALT), 256 to 276 (WFILVLPALLLNYFGQGALVL), 288 to 308 (LLAPSWALLPLIGLSTMATII), 346 to 366 (IYIGAVNWALMVGVIMLVIGF), 378 to 398 (VAVTGTMLCTTILVSTVMLML), 403 to 423 (PLLAVPLLICLLLVDGLFFAA), and 428 to 448 (IFQGGAFPVLAGAVLFILMTT).

The protein belongs to the HAK/KUP transporter (TC 2.A.72) family.

The protein resides in the cell inner membrane. It carries out the reaction K(+)(in) + H(+)(in) = K(+)(out) + H(+)(out). Its function is as follows. Transport of potassium into the cell. Likely operates as a K(+):H(+) symporter. This Pseudomonas syringae pv. tomato (strain ATCC BAA-871 / DC3000) protein is Probable potassium transport system protein Kup.